Here is a 448-residue protein sequence, read N- to C-terminus: Phosphoglucosamine mutase (448 aa).

Catalysis depends on serine 100, which acts as the Phosphoserine intermediate. Mg(2+) is bound by residues serine 100, aspartate 240, aspartate 242, and aspartate 244. A Phosphoserine modification is found at serine 100.

Belongs to the phosphohexose mutase family. Homodimer, may form a complex with CdaA. Mg(2+) serves as cofactor. Post-translationally, activated by phosphorylation.

It carries out the reaction alpha-D-glucosamine 1-phosphate = D-glucosamine 6-phosphate. In terms of biological role, catalyzes the conversion of glucosamine-6-phosphate to glucosamine-1-phosphate. Glucosamine-1-phosphate is used for cell wall biosynthesis. The polypeptide is Phosphoglucosamine mutase (Bacillus subtilis (strain 168)).